We begin with the raw amino-acid sequence, 314 residues long: Putative S-adenosyl-L-methionine-dependent methyltransferase MUL_4402 (314 aa).

Residues aspartate 132 and 161–162 (DL) each bind S-adenosyl-L-methionine. Residues 291-314 (RPVPDDAEGPVPPTLFVSAHRPAA) are disordered.

This sequence belongs to the UPF0677 family.

Exhibits S-adenosyl-L-methionine-dependent methyltransferase activity. The protein is Putative S-adenosyl-L-methionine-dependent methyltransferase MUL_4402 of Mycobacterium ulcerans (strain Agy99).